We begin with the raw amino-acid sequence, 268 residues long: NADH-quinone oxidoreductase subunit B 1 (268 aa).

The [4Fe-4S] cluster site is built by Cys42, Cys43, Cys108, and Cys138.

Belongs to the complex I 20 kDa subunit family. As to quaternary structure, NDH-1 is composed of 14 different subunits. Subunits NuoB, C, D, E, F, and G constitute the peripheral sector of the complex. The cofactor is [4Fe-4S] cluster.

The protein resides in the cell membrane. It catalyses the reaction a quinone + NADH + 5 H(+)(in) = a quinol + NAD(+) + 4 H(+)(out). Functionally, NDH-1 shuttles electrons from NADH, via FMN and iron-sulfur (Fe-S) centers, to quinones in the respiratory chain. The immediate electron acceptor for the enzyme in this species is believed to be ubiquinone. Couples the redox reaction to proton translocation (for every two electrons transferred, four hydrogen ions are translocated across the cytoplasmic membrane), and thus conserves the redox energy in a proton gradient. The sequence is that of NADH-quinone oxidoreductase subunit B 1 from Roseiflexus sp. (strain RS-1).